Reading from the N-terminus, the 393-residue chain is Phospho-N-acetylmuramoyl-pentapeptide-transferase (393 aa).

Helical transmembrane passes span 29–49 (RAVM…PIVI), 75–95 (TPTM…LLWF), 101–121 (FVWI…VDDW), 138–158 (YFWQ…SVSE), 193–213 (SISY…VIVG), 226–246 (GLAI…AYAT), 263–283 (AGEL…FLWF), 290–310 (VFMG…IAVI), 315–335 (VVLA…MAQV), and 370–390 (QVVV…LSSL).

This sequence belongs to the glycosyltransferase 4 family. MraY subfamily. Requires Mg(2+) as cofactor.

It localises to the cell inner membrane. The catalysed reaction is UDP-N-acetyl-alpha-D-muramoyl-L-alanyl-gamma-D-glutamyl-meso-2,6-diaminopimeloyl-D-alanyl-D-alanine + di-trans,octa-cis-undecaprenyl phosphate = di-trans,octa-cis-undecaprenyl diphospho-N-acetyl-alpha-D-muramoyl-L-alanyl-D-glutamyl-meso-2,6-diaminopimeloyl-D-alanyl-D-alanine + UMP. The protein operates within cell wall biogenesis; peptidoglycan biosynthesis. In terms of biological role, catalyzes the initial step of the lipid cycle reactions in the biosynthesis of the cell wall peptidoglycan: transfers peptidoglycan precursor phospho-MurNAc-pentapeptide from UDP-MurNAc-pentapeptide onto the lipid carrier undecaprenyl phosphate, yielding undecaprenyl-pyrophosphoryl-MurNAc-pentapeptide, known as lipid I. This chain is Phospho-N-acetylmuramoyl-pentapeptide-transferase, found in Methylibium petroleiphilum (strain ATCC BAA-1232 / LMG 22953 / PM1).